A 154-amino-acid polypeptide reads, in one-letter code: MKKLLGGPGTVCGLLLRIGQCASAAASIGVMVSAKEFSVHTAFCYLIASMGLQLLWSFGLACLDVYALRGKKDLQNPILVSLFVVGDWVTAMLSLAAACSSAGVVVLYEKDIKYCNTQSQYPCLRYEVAVALSFVTWIQIAVSSHVTFWILASV.

The Cytoplasmic segment spans residues 1–10 (MKKLLGGPGT). A helical transmembrane segment spans residues 11 to 31 (VCGLLLRIGQCASAAASIGVM). The Extracellular segment spans residues 32–42 (VSAKEFSVHTA). The helical transmembrane segment at 43–63 (FCYLIASMGLQLLWSFGLACL) threads the bilayer. Residues 64-77 (DVYALRGKKDLQNP) lie on the Cytoplasmic side of the membrane. Residues 78–98 (ILVSLFVVGDWVTAMLSLAAA) traverse the membrane as a helical segment. Residues 99-129 (CSSAGVVVLYEKDIKYCNTQSQYPCLRYEVA) lie on the Extracellular side of the membrane. The chain crosses the membrane as a helical span at residues 130-150 (VALSFVTWIQIAVSSHVTFWI). Topologically, residues 151–154 (LASV) are cytoplasmic.

The protein belongs to the Casparian strip membrane proteins (CASP) family. Homodimer and heterodimers. Expressed in the stele of the root.

It localises to the cell membrane. The chain is CASP-like protein 5B2 from Arabidopsis thaliana (Mouse-ear cress).